A 136-amino-acid chain; its full sequence is Nucleoside diphosphate kinase (136 aa).

The ATP site is built by lysine 9, phenylalanine 57, arginine 85, threonine 91, arginine 102, and asparagine 112. Histidine 115 functions as the Pros-phosphohistidine intermediate in the catalytic mechanism.

This sequence belongs to the NDK family. Homotetramer. It depends on Mg(2+) as a cofactor.

It localises to the cytoplasm. The enzyme catalyses a 2'-deoxyribonucleoside 5'-diphosphate + ATP = a 2'-deoxyribonucleoside 5'-triphosphate + ADP. The catalysed reaction is a ribonucleoside 5'-diphosphate + ATP = a ribonucleoside 5'-triphosphate + ADP. Functionally, major role in the synthesis of nucleoside triphosphates other than ATP. The ATP gamma phosphate is transferred to the NDP beta phosphate via a ping-pong mechanism, using a phosphorylated active-site intermediate. The protein is Nucleoside diphosphate kinase of Acetivibrio thermocellus (strain ATCC 27405 / DSM 1237 / JCM 9322 / NBRC 103400 / NCIMB 10682 / NRRL B-4536 / VPI 7372) (Clostridium thermocellum).